The primary structure comprises 329 residues: Coiled-coil domain-containing protein 54 (329 aa).

A coiled-coil region spans residues 86–149; it reads NIVSSISNIQ…VTELESQNSY (64 aa). The segment covering 178–191 has biased composition (polar residues); it reads TPKGTATSPDTVIS. A disordered region spans residues 178–214; it reads TPKGTATSPDTVISSAEPERVSSYPEPTGELKKKTTS. Thr-182 carries the post-translational modification Phosphothreonine.

The protein is Coiled-coil domain-containing protein 54 (Ccdc54) of Mus musculus (Mouse).